The following is a 1271-amino-acid chain: Protein flightless-1 homolog (1271 aa).

Position 1 is an N-acetylmethionine (Met-1). The interaction with LRRFIP1 and LRRFIP2 stretch occupies residues 1-427 (MEATGVLPFV…SGSKDPLARK (427 aa)). LRR repeat units follow at residues 7 to 32 (LPFV…VKAM), 33 to 55 (TSLR…LAAL), 56 to 78 (QKLE…LSSL), 80 to 103 (SLRA…IFKL), 104 to 126 (DDLS…LENA), 127 to 149 (KNML…LFIN), 150 to 173 (LTDL…MRRL), 175 to 196 (HLQT…QLPA), 197 to 222 (MMAL…LEGL), 223 to 245 (SNLS…LYTL), 247 to 268 (SLRR…IDQW), 269 to 291 (VHLE…ICKL), 293 to 316 (KLKK…IGKL), 317 to 339 (TSLE…LCRC), 340 to 363 (PKLK…HFLT), and 365 to 385 (IQVL…PADR). N6-acetyllysine is present on Lys-21. Ser-406 bears the Phosphoserine mark. The residue at position 436 (Ser-436) is a Phosphoserine; by SGK3. The segment at 495 to 827 (VGQLPGLTIW…VVSRSLEGTE (333 aa)) is interaction with ACTL6A. Gelsolin-like repeat units lie at residues 509–591 (FVPV…EEFL), 629–703 (NIKL…PGFW), and 759–831 (LMPG…AQVF). At Ser-860 the chain carries Phosphoserine. Residues 951–977 (KTEDKEGKASAEAREGEEAAAEAEEKQ) are disordered. Residues 952-967 (TEDKEGKASAEAREGE) are compositionally biased toward basic and acidic residues. A compositionally biased stretch (acidic residues) spans 968 to 977 (EAAAEAEEKQ). The Gelsolin-like 4 repeat unit spans residues 1183–1256 (KCSDFCQDDL…VRKGNEQRAF (74 aa)).

Interacts with actin, ACTL6A and NCOA2. Interacts with CARM1. Interacts with LRRFIP1, LRRFIP2 and MYD88. Upon LPS stimulation, LRRFIP2 competes for MYD88-binding; LRRFIP1 constitutively blocks the interaction with MyD88, even in the absence of LPS. Interacts with the nuclear receptors ESR1 and THRB. Interacts with SGK3. Interacts (via the gelsolin-like region) with TMOD1 and TMOD3. Interacts with LMOD2, VCL, GSN and DES. Expressed in blastocyst.

Its subcellular location is the nucleus. It is found in the cytoplasm. The protein localises to the cytoskeleton. It localises to the microtubule organizing center. The protein resides in the centrosome. Its subcellular location is the cell junction. It is found in the focal adhesion. The protein localises to the cell projection. It localises to the podosome. Is a regulator of actin polymerization, required for proper myofibril organization and regulation of the length of sarcomeric thin filaments. It also plays a role in the assembly of cardiomyocyte cell adhesion complexes. Regulates cytoskeletal rearrangements involved in cytokinesis and cell migration, by inhibiting Rac1-dependent paxillin phosphorylation. May play a role as coactivator in transcriptional activation by hormone-activated nuclear receptors (NR) and acts in cooperation with NCOA2 and CARM1. Involved in estrogen hormone signaling. The polypeptide is Protein flightless-1 homolog (Flii) (Mus musculus (Mouse)).